Here is a 354-residue protein sequence, read N- to C-terminus: Rhodopsin (354 aa).

Residues 1-36 lie on the Extracellular side of the membrane; sequence MNGTEGPAFYVPMSNATGVVRSPYEYPQYYLVAPWA. Residues Asn2 and Asn15 are each glycosylated (N-linked (GlcNAc...) asparagine). Residues 37-61 traverse the membrane as a helical segment; the sequence is YGLLAAYMFFLIITGFPVNFLTLYV. The Cytoplasmic portion of the chain corresponds to 62–73; that stretch reads TIEHKKLRTPLN. Residues 74–96 form a helical membrane-spanning segment; that stretch reads YILLNLAIADLFMVFGGFTTTMY. The Extracellular segment spans residues 97–110; the sequence is TSLHGYFVFGRLGC. The cysteines at positions 110 and 187 are disulfide-linked. The helical transmembrane segment at 111–133 threads the bilayer; that stretch reads NLEGFFATLGGEMGLWSLVVLAI. The 'Ionic lock' involved in activated form stabilization signature appears at 134–136; that stretch reads ERW. Over 134 to 152 the chain is Cytoplasmic; the sequence is ERWMVVCKPVSNFRFGENH. Residues 153–173 traverse the membrane as a helical segment; that stretch reads AIMGVAFTWVMACSCAVPPLV. Residues 174-202 are Extracellular-facing; sequence GWSRYIPEGMQCSCGVDYYTRTPGVNNES. N-linked (GlcNAc...) asparagine glycosylation occurs at Asn200. The helical transmembrane segment at 203-224 threads the bilayer; it reads FVIYMFIVHFFIPLIVIFFCYG. Residues 225–252 are Cytoplasmic-facing; sequence RLVCTVKEAAAQQQESETTQRAEREVTR. The chain crosses the membrane as a helical span at residues 253-274; the sequence is MVIIMVIAFLICWLPYAGVAWY. Residues 275–286 lie on the Extracellular side of the membrane; sequence IFTHQGSEFGPV. The chain crosses the membrane as a helical span at residues 287 to 308; it reads FMTLPAFFAKTSAVYNPCIYIC. Lys296 is modified (N6-(retinylidene)lysine). The Cytoplasmic portion of the chain corresponds to 309–354; the sequence is MNKQFRHCMITTLCCGKNPFEEEEGASTTASKTEASSVSSSSVSPA. Positions 333-354 are disordered; that stretch reads GASTTASKTEASSVSSSSVSPA. A compositionally biased stretch (low complexity) spans 334–354; the sequence is ASTTASKTEASSVSSSSVSPA.

Belongs to the G-protein coupled receptor 1 family. Opsin subfamily. Phosphorylated on some or all of the serine and threonine residues present in the C-terminal region. In terms of processing, contains one covalently linked retinal chromophore. As to expression, retinal rod photoreceptor cells, predominantly in the outer segments (at protein level). Retinal rod photoreceptor cells.

It localises to the membrane. The protein resides in the cell projection. Its subcellular location is the cilium. The protein localises to the photoreceptor outer segment. In terms of biological role, photoreceptor required for image-forming vision at low light intensity. While most salt water fish species use retinal as chromophore, most freshwater fish use 3-dehydroretinal, or a mixture of retinal and 3-dehydroretinal. Light-induced isomerization of 11-cis to all-trans retinal triggers a conformational change that activates signaling via G-proteins. Subsequent receptor phosphorylation mediates displacement of the bound G-protein alpha subunit by arrestin and terminates signaling. The polypeptide is Rhodopsin (rho) (Danio rerio (Zebrafish)).